The primary structure comprises 351 residues: tRNA (guanine(26)-N(2))-dimethyltransferase (351 aa).

In terms of domain architecture, Trm1 methyltransferase spans 4–350 (VLRREGAVQF…AGYGEVKRAL (347 aa)). Arg39, Arg65, Asp83, Asp109, and Ala110 together coordinate S-adenosyl-L-methionine.

Belongs to the class I-like SAM-binding methyltransferase superfamily. Trm1 family.

The enzyme catalyses guanosine(26) in tRNA + 2 S-adenosyl-L-methionine = N(2)-dimethylguanosine(26) in tRNA + 2 S-adenosyl-L-homocysteine + 2 H(+). Its function is as follows. Dimethylates a single guanine residue at position 26 of a number of tRNAs using S-adenosyl-L-methionine as donor of the methyl groups. This chain is tRNA (guanine(26)-N(2))-dimethyltransferase, found in Pyrobaculum neutrophilum (strain DSM 2338 / JCM 9278 / NBRC 100436 / V24Sta) (Thermoproteus neutrophilus).